Reading from the N-terminus, the 921-residue chain is SLSSAISPSSYAAIAAAYSARTPIFNKKKTAAVLSPLSLFHQSPSLSKTGIFLHRGRKESSSKFYIAASVTTAVPSLDDSVEKVHLPRGAMWSIHKFGGTCVGSSERIRNVAEIVVEDDSERKLVVVSAMSKVTDMMYDLIYKAQSRDDSYESALDAVMEKHKLTAFDLLDEDDLARFLTRLQHDVITLKAMLRAIYIAGHATESFSDFVVGHGELWSAQLLSFVIRKNGGDCNWMDTRDVLVVNPAGSNQVDPDYLESEKRLEKWFSSNQCQTIVATGFIASTPQNIPTTLKRDGSDFSAAIMGALLRAGQVTIWTDVNGVYSADPRKVSEAVVLKTLSYQEAWEMSYFGANVLHPRTINPVMRYDIPIVIRNIFNLSAPGTMICRESVGETEDGLKLESHVKGFATIDNLALINVEGTGMAGVPGTATAIFGAVKDVGANVIMISQASSEHSICFAVPESEVKAVAKALEARFRQALDAGRLSQVANNPNCSILATVGQKMASTPGVSATLFNALAKANINVRAIAQGCTEYNITVVLSREDCVRALKAVHSRFYLSRTTIAVGIVGPGLIGATLLDQLRDQAAILKENSKIDLRVMGITGSRTMLLSETGIDLSRWREVQKEKGQTAGLEKFVQHVRGNHFIPSTVIVDCTADSEVASHYHDWLCRGIHVITPNKKANSGPLDQYLKLRALQRRSYTHYFYEATVVAGLPIITTLQGLLETGDKILRIEGIFSGTLSYIFNNFKSTTPFSEVVSEAKAAGYTEPDPRDDLAGTDVARKVIILARGSGLKLELSDIPVQSLVPEPLRGIASAEEFLLQLPQFDSDMTRKREDAENAGEVLRYVGVVDAVNQKGVVELKRYKKEHPFAQLSGSDNINAFTTERYNKQPPIIRGPGAGAEVTAGGVFSDILRLASYLGAPS.

A chloroplast-targeting transit peptide spans 1 to 87 (SLSSAISPSS…DDSVEKVHLP (87 aa)). Positions 88-339 (RGAMWSIHKF…VSEAVVLKTL (252 aa)) are aspartokinase. Residues 340–567 (SYQEAWEMSY…LSRTTIAVGI (228 aa)) are interface. ACT domains are found at residues 417 to 489 (VEGT…QVAN) and 498 to 575 (TVGQ…LIGA). Residues 568–921 (VGPGLIGATL…RLASYLGAPS (354 aa)) form a homoserine dehydrogenase region. An NAD(+)-binding site is contributed by isoleucine 573. NADP(+) is bound by residues isoleucine 573, arginine 605, threonine 654, and lysine 678. Position 573 (isoleucine 573) interacts with NADPH. Threonine 654 provides a ligand contact to NAD(+). 2 residues coordinate NADPH: threonine 654 and lysine 678. Positions 705, 708, 710, and 712 each coordinate Na(+). Residues glycine 763 and glutamate 766 each contribute to the NADP(+) site. L-homoserine contacts are provided by glutamate 766 and aspartate 777. The active-site Proton donor is the lysine 781. Glycine 898 provides a ligand contact to NAD(+). Glycine 898 contributes to the NADP(+) binding site. NADPH is bound at residue glycine 898.

This sequence in the N-terminal section; belongs to the aspartokinase family. It in the C-terminal section; belongs to the homoserine dehydrogenase family. It depends on a metal cation as a cofactor.

Its subcellular location is the plastid. It is found in the chloroplast. The enzyme catalyses L-homoserine + NADP(+) = L-aspartate 4-semialdehyde + NADPH + H(+). It catalyses the reaction L-homoserine + NAD(+) = L-aspartate 4-semialdehyde + NADH + H(+). It carries out the reaction L-aspartate + ATP = 4-phospho-L-aspartate + ADP. Its pathway is amino-acid biosynthesis; L-lysine biosynthesis via DAP pathway; (S)-tetrahydrodipicolinate from L-aspartate: step 1/4. It functions in the pathway amino-acid biosynthesis; L-methionine biosynthesis via de novo pathway; L-homoserine from L-aspartate: step 1/3. The protein operates within amino-acid biosynthesis; L-methionine biosynthesis via de novo pathway; L-homoserine from L-aspartate: step 3/3. It participates in amino-acid biosynthesis; L-threonine biosynthesis; L-threonine from L-aspartate: step 1/5. Its pathway is amino-acid biosynthesis; L-threonine biosynthesis; L-threonine from L-aspartate: step 3/5. Bifunctional aspartate kinase and homoserine dehydrogenase that catalyzes the first and the third steps toward the synthesis of lysine, methionine and threonine from aspartate. This chain is Bifunctional aspartokinase/homoserine dehydrogenase, chloroplastic, found in Daucus carota (Wild carrot).